The sequence spans 275 residues: Phosphate import ATP-binding protein PstB 2 (275 aa).

The ABC transporter domain maps to 29-270 (LEVKNLNIYY…PSEKKTEDYI (242 aa)). ATP is bound at residue 61–68 (GPSGCGKS).

Belongs to the ABC transporter superfamily. Phosphate importer (TC 3.A.1.7) family. As to quaternary structure, the complex is composed of two ATP-binding proteins (PstB), two transmembrane proteins (PstC and PstA) and a solute-binding protein (PstS).

It is found in the cell membrane. The catalysed reaction is phosphate(out) + ATP + H2O = ADP + 2 phosphate(in) + H(+). Functionally, part of the ABC transporter complex PstSACB involved in phosphate import. Responsible for energy coupling to the transport system. The polypeptide is Phosphate import ATP-binding protein PstB 2 (Bacillus licheniformis (strain ATCC 14580 / DSM 13 / JCM 2505 / CCUG 7422 / NBRC 12200 / NCIMB 9375 / NCTC 10341 / NRRL NRS-1264 / Gibson 46)).